We begin with the raw amino-acid sequence, 264 residues long: MDARVFQSYSARAEGMKNPIAKELLALMEEKQSNLSVAVDLTKKSEILELVDKIGPYVCVIKTHIDVVEDFDQDMVEKLVALGKKHRFLIFEDRKFADIGNTVKLQYASGVYKIASWAHITNCHTVPGEGIIQGLKEVGLPLGRGLLLLAEMSSKGSLATGSYTEKTLEWFEKHTDFCFGFIAGRRFPNLQSDYITMSPGIGLDVKGDGLGQQYRTPEEVIVNCGSDIIIVGRGVYGAGRNPVVEAKRYREAGWKAYQQRLSQH.

Residues Asp-40, 62-64, 93-102, Tyr-214, and Arg-233 each bind substrate; these read KTH and DRKFADIGNT. The active-site Proton donor is Lys-95.

It belongs to the OMP decarboxylase family.

It carries out the reaction orotidine 5'-phosphate + H(+) = UMP + CO2. Its pathway is pyrimidine metabolism; UMP biosynthesis via de novo pathway; UMP from orotate: step 2/2. The sequence is that of Orotidine 5'-phosphate decarboxylase (ura4) from Schizosaccharomyces pombe (strain 972 / ATCC 24843) (Fission yeast).